Here is a 326-residue protein sequence, read N- to C-terminus: Ribose operon repressor (326 aa).

One can recognise an HTH lacI-type domain in the interval Met-1–Lys-56. A DNA-binding region (H-T-H motif) is located at residues Ile-4 to Asn-23.

In terms of biological role, transcriptional repressor for the ribose rbsDACBK operon. The polypeptide is Ribose operon repressor (rbsR) (Bacillus subtilis (strain 168)).